The primary structure comprises 316 residues: Acetyl-coenzyme A carboxylase carboxyl transferase subunit alpha (316 aa).

A CoA carboxyltransferase C-terminal domain is found at 36–290 (LLEERLARLR…KEALLKALEE (255 aa)).

The protein belongs to the AccA family. In terms of assembly, acetyl-CoA carboxylase is a heterohexamer composed of biotin carboxyl carrier protein (AccB), biotin carboxylase (AccC) and two subunits each of ACCase subunit alpha (AccA) and ACCase subunit beta (AccD).

It localises to the cytoplasm. It carries out the reaction N(6)-carboxybiotinyl-L-lysyl-[protein] + acetyl-CoA = N(6)-biotinyl-L-lysyl-[protein] + malonyl-CoA. The protein operates within lipid metabolism; malonyl-CoA biosynthesis; malonyl-CoA from acetyl-CoA: step 1/1. Component of the acetyl coenzyme A carboxylase (ACC) complex. First, biotin carboxylase catalyzes the carboxylation of biotin on its carrier protein (BCCP) and then the CO(2) group is transferred by the carboxyltransferase to acetyl-CoA to form malonyl-CoA. The protein is Acetyl-coenzyme A carboxylase carboxyl transferase subunit alpha of Thermus thermophilus (strain ATCC 27634 / DSM 579 / HB8).